Consider the following 195-residue polypeptide: Small ribosomal subunit protein eS1 (195 aa).

This sequence belongs to the eukaryotic ribosomal protein eS1 family.

In Methanothermobacter thermautotrophicus (strain ATCC 29096 / DSM 1053 / JCM 10044 / NBRC 100330 / Delta H) (Methanobacterium thermoautotrophicum), this protein is Small ribosomal subunit protein eS1.